The chain runs to 499 residues: Probable cytosol aminopeptidase (499 aa).

2 residues coordinate Mn(2+): K269 and D274. K281 is an active-site residue. Mn(2+)-binding residues include D292, D351, and E353. R355 is a catalytic residue.

It belongs to the peptidase M17 family. The cofactor is Mn(2+).

Its subcellular location is the cytoplasm. It catalyses the reaction Release of an N-terminal amino acid, Xaa-|-Yaa-, in which Xaa is preferably Leu, but may be other amino acids including Pro although not Arg or Lys, and Yaa may be Pro. Amino acid amides and methyl esters are also readily hydrolyzed, but rates on arylamides are exceedingly low.. The enzyme catalyses Release of an N-terminal amino acid, preferentially leucine, but not glutamic or aspartic acids.. Presumably involved in the processing and regular turnover of intracellular proteins. Catalyzes the removal of unsubstituted N-terminal amino acids from various peptides. The protein is Probable cytosol aminopeptidase of Actinobacillus pleuropneumoniae serotype 3 (strain JL03).